The chain runs to 332 residues: Adenosine receptor A2b (332 aa).

At 1 to 8 the chain is on the extracellular side; that stretch reads MQLETQDA. Residues 9–33 traverse the membrane as a helical segment; it reads LYVALELAIAALSVAGNVLVCAAVG. Residues 34 to 43 are Cytoplasmic-facing; the sequence is TSSALQTPTN. Residues 44–67 traverse the membrane as a helical segment; that stretch reads YFLVSLAAADVAVGLFAIPFAITI. Residues 68-78 lie on the Extracellular side of the membrane; the sequence is SLGFCTDFHSC. Cysteines 78 and 170 form a disulfide. The helical transmembrane segment at 79 to 101 threads the bilayer; it reads LFLACFVLVLTQSSIFSLLAVAV. Residues 102-121 lie on the Cytoplasmic side of the membrane; the sequence is DRYLAIRVPLRYKSLVTGTR. The chain crosses the membrane as a helical span at residues 122-144; the sequence is ARGVIAVLWVLAFGIGLTPFLGW. Topologically, residues 145 to 177 are extracellular; that stretch reads NSKDSATNCTEPWDGTTNESCCLVKCLFENVVP. 2 N-linked (GlcNAc...) asparagine glycosylation sites follow: asparagine 152 and asparagine 162. Glutamate 173 provides a ligand contact to adenosine. The helical transmembrane segment at 178-202 threads the bilayer; that stretch reads MSYMVYFNFFGCVLPPLLIMLVIYI. Topologically, residues 203–234 are cytoplasmic; the sequence is KIFMVACKQLQRTELVDHSRTVIQREIHAAKS. A helical membrane pass occupies residues 235 to 258; it reads LAMIVGIFALCWLPVHAINCVTLF. Asparagine 253 contacts adenosine. The Extracellular portion of the chain corresponds to 259-266; the sequence is QPARAKDK. The chain crosses the membrane as a helical span at residues 267 to 290; that stretch reads PKWAMNMAILLSHASSVVNPIVYA. Positions 278 and 279 each coordinate adenosine. Topologically, residues 291–332 are cytoplasmic; that stretch reads YRNRDFRYTFHKIISRYVLCQTDVLKSGNGQAGTQSALDVGL. Residue cysteine 310 is the site of S-palmitoyl cysteine attachment.

The protein belongs to the G-protein coupled receptor 1 family.

It is found in the cell membrane. Functionally, receptor for adenosine. The activity of this receptor is mediated by G proteins which activate adenylyl cyclase. The sequence is that of Adenosine receptor A2b (ADORA2B) from Canis lupus familiaris (Dog).